The sequence spans 249 residues: dTDP-4-amino-2,3,4,6-tetradeoxy-D-glucose N,N-dimethyltransferase (249 aa).

Substrate is bound at residue Arg30. Residues Ala59, Glu80, and 102 to 103 contribute to the S-adenosyl-L-methionine site; that span reads DI. Substrate is bound by residues Thr165, 178–182, and Arg241; that span reads RLSHS.

The protein belongs to the methyltransferase TylM1/DesVI family. In terms of assembly, homodimer. Mg(2+) serves as cofactor.

The catalysed reaction is dTDP-4-amino-2,3,4,6-tetradeoxy-alpha-D-erythro-hexopyranose + 2 S-adenosyl-L-methionine = dTDP-alpha-D-forosamine + 2 S-adenosyl-L-homocysteine + 2 H(+). Functionally, involved in the biosynthesis of forosamine ((4-dimethylamino)-2,3,4,6-tetradeoxy-alpha-D-threo-hexopyranose), a highly deoxygenated sugar component of several bioactive natural products such as the insecticidal spinosyns A and D. Catalyzes the dimethylation of the C-4 amino group from dTDP-4-amino-2,3,4,6-tetradeoxy-alpha-D-glucose to yield dTDP-D-forosamine. This Saccharopolyspora spinosa protein is dTDP-4-amino-2,3,4,6-tetradeoxy-D-glucose N,N-dimethyltransferase.